The sequence spans 181 residues: Adenine phosphoribosyltransferase (181 aa).

Belongs to the purine/pyrimidine phosphoribosyltransferase family. In terms of assembly, homodimer.

The protein resides in the cytoplasm. It catalyses the reaction AMP + diphosphate = 5-phospho-alpha-D-ribose 1-diphosphate + adenine. The protein operates within purine metabolism; AMP biosynthesis via salvage pathway; AMP from adenine: step 1/1. Catalyzes a salvage reaction resulting in the formation of AMP, that is energically less costly than de novo synthesis. The chain is Adenine phosphoribosyltransferase from Shewanella loihica (strain ATCC BAA-1088 / PV-4).